Reading from the N-terminus, the 479-residue chain is Aspartyl/glutamyl-tRNA(Asn/Gln) amidotransferase subunit B (479 aa).

This sequence belongs to the GatB/GatE family. GatB subfamily. As to quaternary structure, heterotrimer of A, B and C subunits.

It catalyses the reaction L-glutamyl-tRNA(Gln) + L-glutamine + ATP + H2O = L-glutaminyl-tRNA(Gln) + L-glutamate + ADP + phosphate + H(+). The enzyme catalyses L-aspartyl-tRNA(Asn) + L-glutamine + ATP + H2O = L-asparaginyl-tRNA(Asn) + L-glutamate + ADP + phosphate + 2 H(+). Its function is as follows. Allows the formation of correctly charged Asn-tRNA(Asn) or Gln-tRNA(Gln) through the transamidation of misacylated Asp-tRNA(Asn) or Glu-tRNA(Gln) in organisms which lack either or both of asparaginyl-tRNA or glutaminyl-tRNA synthetases. The reaction takes place in the presence of glutamine and ATP through an activated phospho-Asp-tRNA(Asn) or phospho-Glu-tRNA(Gln). This Mycoplasma mycoides subsp. mycoides SC (strain CCUG 32753 / NCTC 10114 / PG1) protein is Aspartyl/glutamyl-tRNA(Asn/Gln) amidotransferase subunit B.